A 135-amino-acid polypeptide reads, in one-letter code: UPF0299 membrane protein YE2790 (135 aa).

4 helical membrane-spanning segments follow: residues 4 to 24, 30 to 50, 63 to 83, and 93 to 113; these read VTSL…CLWA, LLLP…FALL, GCHL…VGVM, and FGPI…VVGY.

Belongs to the UPF0299 family.

The protein localises to the cell inner membrane. In Yersinia enterocolitica serotype O:8 / biotype 1B (strain NCTC 13174 / 8081), this protein is UPF0299 membrane protein YE2790.